Consider the following 2890-residue polypeptide: Bifunctional DNA-directed RNA polymerase subunit beta-beta' (2890 aa).

Residues 1–1377 form a DNA-directed RNA polymerase subunit beta region; that stretch reads MSKKIPLKNR…DINIFGDEMD (1377 aa). The interval 1384–2890 is DNA-directed RNA polymerase subunit beta'; it reads PIVIKEDDRP…LRTIEDSPKI (1507 aa). Zn(2+) is bound by residues Cys-1449, Cys-1451, Cys-1465, and Cys-1468. Positions 1849, 1851, and 1853 each coordinate Mg(2+). Zn(2+) contacts are provided by Cys-2179, Cys-2253, Cys-2260, and Cys-2263.

The protein in the N-terminal section; belongs to the RNA polymerase beta chain family. In the C-terminal section; belongs to the RNA polymerase beta' chain family. In terms of assembly, the RNAP catalytic core consists of 2 alpha, 1 beta/beta' and 1 omega subunit. When a sigma factor is associated with the core the holoenzyme is formed, which can initiate transcription. The cofactor is Mg(2+). Zn(2+) is required as a cofactor.

It carries out the reaction RNA(n) + a ribonucleoside 5'-triphosphate = RNA(n+1) + diphosphate. In terms of biological role, DNA-dependent RNA polymerase catalyzes the transcription of DNA into RNA using the four ribonucleoside triphosphates as substrates. This is Bifunctional DNA-directed RNA polymerase subunit beta-beta' (rpoBC) from Helicobacter acinonychis (strain Sheeba).